We begin with the raw amino-acid sequence, 199 residues long: Large ribosomal subunit protein uL4 (199 aa).

Belongs to the universal ribosomal protein uL4 family. Part of the 50S ribosomal subunit.

In terms of biological role, one of the primary rRNA binding proteins, this protein initially binds near the 5'-end of the 23S rRNA. It is important during the early stages of 50S assembly. It makes multiple contacts with different domains of the 23S rRNA in the assembled 50S subunit and ribosome. Forms part of the polypeptide exit tunnel. The protein is Large ribosomal subunit protein uL4 of Aquifex aeolicus (strain VF5).